The chain runs to 232 residues: 5'-methylthioadenosine/S-adenosylhomocysteine nucleosidase (232 aa).

Glutamate 12 serves as the catalytic Proton acceptor. Residues glycine 78, isoleucine 152, and 173 to 174 (ME) contribute to the substrate site. Catalysis depends on aspartate 197, which acts as the Proton donor.

The protein belongs to the PNP/UDP phosphorylase family. MtnN subfamily. In terms of assembly, homodimer.

The catalysed reaction is S-adenosyl-L-homocysteine + H2O = S-(5-deoxy-D-ribos-5-yl)-L-homocysteine + adenine. It catalyses the reaction S-methyl-5'-thioadenosine + H2O = 5-(methylsulfanyl)-D-ribose + adenine. The enzyme catalyses 5'-deoxyadenosine + H2O = 5-deoxy-D-ribose + adenine. The protein operates within amino-acid biosynthesis; L-methionine biosynthesis via salvage pathway; S-methyl-5-thio-alpha-D-ribose 1-phosphate from S-methyl-5'-thioadenosine (hydrolase route): step 1/2. Catalyzes the irreversible cleavage of the glycosidic bond in both 5'-methylthioadenosine (MTA) and S-adenosylhomocysteine (SAH/AdoHcy) to adenine and the corresponding thioribose, 5'-methylthioribose and S-ribosylhomocysteine, respectively. Also cleaves 5'-deoxyadenosine, a toxic by-product of radical S-adenosylmethionine (SAM) enzymes, into 5-deoxyribose and adenine. Thus, is required for in vivo function of the radical SAM enzymes biotin synthase and lipoic acid synthase, that are inhibited by 5'-deoxyadenosine accumulation. In Citrobacter koseri (strain ATCC BAA-895 / CDC 4225-83 / SGSC4696), this protein is 5'-methylthioadenosine/S-adenosylhomocysteine nucleosidase.